The primary structure comprises 505 residues: Deoxyguanosinetriphosphate triphosphohydrolase (505 aa).

An HD domain is found at Arg-66 to Cys-273.

It belongs to the dGTPase family. Type 1 subfamily. As to quaternary structure, homotetramer. Requires Mg(2+) as cofactor.

The catalysed reaction is dGTP + H2O = 2'-deoxyguanosine + triphosphate + H(+). Its function is as follows. dGTPase preferentially hydrolyzes dGTP over the other canonical NTPs. This is Deoxyguanosinetriphosphate triphosphohydrolase from Shigella flexneri.